We begin with the raw amino-acid sequence, 283 residues long: Undecaprenyl-diphosphatase (283 aa).

6 helical membrane passes run 47-67 (PGLSVTAVIQLGSIVAVIAYF), 94-114 (LGIAMLIGTLPILIAGLCIKL), 127-147 (VPAIAVVSIVMALLLGFAELL), 197-217 (AARFSFLLGIPAITIAGLVEL), 227-247 (GGVLPVFVGICSAAVVSWLAI), and 261-281 (IFVVYRLLFGVLLLVWWSGSA).

The protein belongs to the UppP family.

The protein resides in the cell inner membrane. The enzyme catalyses di-trans,octa-cis-undecaprenyl diphosphate + H2O = di-trans,octa-cis-undecaprenyl phosphate + phosphate + H(+). Catalyzes the dephosphorylation of undecaprenyl diphosphate (UPP). Confers resistance to bacitracin. This chain is Undecaprenyl-diphosphatase, found in Synechococcus sp. (strain CC9311).